Here is a 366-residue protein sequence, read N- to C-terminus: Ribosomal RNA large subunit methyltransferase M (366 aa).

S-adenosyl-L-methionine contacts are provided by residues Ser188, 221 to 224, Asp240, Asp260, and Asp277; that span reads CPGG. Lys306 functions as the Proton acceptor in the catalytic mechanism.

It belongs to the class I-like SAM-binding methyltransferase superfamily. RNA methyltransferase RlmE family. RlmM subfamily. As to quaternary structure, monomer.

The protein resides in the cytoplasm. It catalyses the reaction cytidine(2498) in 23S rRNA + S-adenosyl-L-methionine = 2'-O-methylcytidine(2498) in 23S rRNA + S-adenosyl-L-homocysteine + H(+). In terms of biological role, catalyzes the 2'-O-methylation at nucleotide C2498 in 23S rRNA. This is Ribosomal RNA large subunit methyltransferase M from Shigella sonnei (strain Ss046).